Here is a 206-residue protein sequence, read N- to C-terminus: Alpha-S1-casein (206 aa).

The signal sequence occupies residues 1–15 (MKLLIFICLAAVALA). Phosphoserine is present on residues Ser33, Ser77, Ser78, Ser79, Ser80, Ser81, Ser82, and Ser89. The segment at 67–106 (HGMEGHEQRGSSSSSSEEVVGNSAEQKHVQKEEDVPSQSY) is disordered. The segment covering 91–100 (EQKHVQKEED) has biased composition (basic and acidic residues).

The protein belongs to the alpha-casein family. Mammary gland specific. Secreted in milk.

The protein resides in the secreted. Functionally, important role in the capacity of milk to transport calcium phosphate. This Sus scrofa (Pig) protein is Alpha-S1-casein (CSN1S1).